Here is a 1479-residue protein sequence, read N- to C-terminus: Type VII secretion system protein EssC (1479 aa).

The Cytoplasmic segment spans residues 1 to 229 (MHKLIIKYNK…RPPQPIQKNN (229 aa)). The chain crosses the membrane as a helical span at residues 230 to 252 (TVIWRSIIPPLVMIALTVVIFLV). At 253 to 256 (RPIG) the chain is on the extracellular side. Residues 257 to 279 (IYILMMIGMSSVTIVFGITTYFS) traverse the membrane as a helical segment. Topologically, residues 280 to 1479 (EKKKYNKDVE…QAYQKIRWFK (1200 aa)) are cytoplasmic. FtsK domains are found at residues 652–846 (DDIL…QDSN) and 997–1183 (QGPM…SEVS). ATP is bound by residues 672–679 (GTTGSGKS) and 1014–1021 (GSPGYGRT).

It belongs to the EssC family. Homooligomer. Interacts with EsaE.

Its subcellular location is the cell membrane. In terms of biological role, component of the type VII secretion system (Ess). Required for the secretion of substrates including EsxA and EsxB. However, unable to support secretion of the substrate protein EsxC. In Staphylococcus aureus (strain MSSA476), this protein is Type VII secretion system protein EssC.